A 715-amino-acid chain; its full sequence is Methylmalonyl-CoA mutase large subunit (715 aa).

(R)-methylmalonyl-CoA-binding residues include Tyr-70, Met-73, Arg-77, Thr-80, Arg-82, Tyr-84, and Ser-109. Phe-112 and Ala-134 together coordinate cob(II)alamin. Thr-190 and Gln-192 together coordinate (R)-methylmalonyl-CoA. Residues Val-201 and Arg-202 each contribute to the cob(II)alamin site. Residues Arg-202, His-239, Arg-278, and Ser-280 each contribute to the (R)-methylmalonyl-CoA site. Residues Gly-328, Glu-365, Ala-368, Gly-599, His-600, Asp-601, Arg-602, Ser-645, Leu-647, Gly-676, and Thr-699 each coordinate cob(II)alamin. In terms of domain architecture, B12-binding spans 587-715; the sequence is QPRIMIAKMG…AKVLEILLEE (129 aa).

Belongs to the methylmalonyl-CoA mutase family. As to quaternary structure, heterodimer of an alpha and a beta chain. Requires adenosylcob(III)alamin as cofactor.

The enzyme catalyses (R)-methylmalonyl-CoA = succinyl-CoA. Catalyzes the isomerization of succinyl-CoA to methylmalonyl-CoA during synthesis of propionate from tricarboxylic acid-cycle intermediates. In Porphyromonas gingivalis (strain ATCC BAA-308 / W83), this protein is Methylmalonyl-CoA mutase large subunit (mutB).